A 226-amino-acid chain; its full sequence is Putative mitochondrial outer membrane protein porin 5 (226 aa).

Belongs to the eukaryotic mitochondrial porin (TC 1.B.8.1) family.

It is found in the mitochondrion outer membrane. Putative channel that allows diffusion of small hydrophilic molecules through membranes. The chain is Putative mitochondrial outer membrane protein porin 5 (VDAC5) from Arabidopsis thaliana (Mouse-ear cress).